Consider the following 347-residue polypeptide: Biotin synthase (347 aa).

Residues 54-273 (NHVETASLLS…IAVARIMMPK (220 aa)) form the Radical SAM core domain. [4Fe-4S] cluster-binding residues include Cys69, Cys73, and Cys76. Residues Cys113, Cys144, Cys204, and Arg277 each contribute to the [2Fe-2S] cluster site.

It belongs to the radical SAM superfamily. Biotin synthase family. Homodimer. [4Fe-4S] cluster is required as a cofactor. [2Fe-2S] cluster serves as cofactor.

The enzyme catalyses (4R,5S)-dethiobiotin + (sulfur carrier)-SH + 2 reduced [2Fe-2S]-[ferredoxin] + 2 S-adenosyl-L-methionine = (sulfur carrier)-H + biotin + 2 5'-deoxyadenosine + 2 L-methionine + 2 oxidized [2Fe-2S]-[ferredoxin]. It participates in cofactor biosynthesis; biotin biosynthesis; biotin from 7,8-diaminononanoate: step 2/2. Its function is as follows. Catalyzes the conversion of dethiobiotin (DTB) to biotin by the insertion of a sulfur atom into dethiobiotin via a radical-based mechanism. This is Biotin synthase from Afipia carboxidovorans (strain ATCC 49405 / DSM 1227 / KCTC 32145 / OM5) (Oligotropha carboxidovorans).